The following is a 227-amino-acid chain: Urease accessory protein UreG (227 aa).

Basic and acidic residues predominate over residues 1-10 (MHLDHAHTHD). A disordered region spans residues 1–22 (MHLDHAHTHDGPSAVSADAHRP). A GTP-binding site is contributed by 35–42 (GPVGSGKT).

It belongs to the SIMIBI class G3E GTPase family. UreG subfamily. As to quaternary structure, homodimer. UreD, UreF and UreG form a complex that acts as a GTP-hydrolysis-dependent molecular chaperone, activating the urease apoprotein by helping to assemble the nickel containing metallocenter of UreC. The UreE protein probably delivers the nickel.

It localises to the cytoplasm. Functionally, facilitates the functional incorporation of the urease nickel metallocenter. This process requires GTP hydrolysis, probably effectuated by UreG. The sequence is that of Urease accessory protein UreG from Streptomyces avermitilis (strain ATCC 31267 / DSM 46492 / JCM 5070 / NBRC 14893 / NCIMB 12804 / NRRL 8165 / MA-4680).